Here is a 420-residue protein sequence, read N- to C-terminus: Transcription factor IIIB 50 kDa subunit (420 aa).

The TFIIB-type zinc-finger motif lies at N3–T36. Residues C7, C10, C28, and C31 each coordinate Zn(2+). Tandem repeats lie at residues D72–V157 and V173–Q249. Residues A108–K114 are interaction with target DNA. The disordered stretch occupies residues T316–D387. Residues Q322–Q336 show a composition bias toward low complexity. Position 354 is a phosphoserine (S354). Residues L358–L364 form a required for the formation of a ternary complex with DNA and TBP; not required for interaction with TBP in the absence of DNA region. C362 is subject to Cysteine sulfenic acid (-SOH). The interval P366 to P420 is required for interaction with TBP and formation of a ternary complex with DNA and TBP.

The protein belongs to the TFIIB family. As to quaternary structure, component of TFIIIB complexes. The TFIIIB complex has two activities, alpha and beta. The TFIIIB-alpha activity complex is composed of TBP, BDP1, and a complex containing both BRF2 and at least four stably associated proteins; this complex inhibits the transcription by pol III via its phosphorylation by CK2; YY1 facilitates the TFIIIB-alpha complex formation. Interacts with TBP; this interaction promotes recruitment of BRF2 to TATA box-containing promoters. Interacts with TBP and the BURE sequence (GC-rich sequence downstream from the TATA box) to form a strong ternary complex which is joined by BDP1; this ternary complex stimulates pol III transcription. Forms a trimeric complex composed of TBP, BRF2 and mini-SNAPc complex (SNAP43, SNAP50, and the N-terminal third of SNAP190) on the promoter. Assembly of the TBP-BRF2 complex is stimulated by SNAP190. Interacts with MAF1 and SNAPC4. In terms of processing, in response to oxidative stress, Cys-362 is reversibly oxidized to cysteine sulfenic acid. Oxidation of Cys-362 impairs formation of a ternary complex with TBP and DNA and down-regulates expression of target genes in response to oxidative stress.

The protein resides in the nucleus. Functionally, general activator of RNA polymerase III transcription. Factor exclusively required for RNA polymerase III transcription of genes with promoter elements upstream of the initiation sites. Contributes to the regulation of gene expression; functions as activator in the absence of oxidative stress. Down-regulates expression of target genes in response to oxidative stress. Overexpression protects cells against apoptosis in response to oxidative stress. The polypeptide is Transcription factor IIIB 50 kDa subunit (Brf2) (Mus musculus (Mouse)).